The sequence spans 194 residues: Glycerol-3-phosphate acyltransferase (194 aa).

Transmembrane regions (helical) follow at residues I3–G23, V47–P67, I78–L97, I112–F132, and L153–I173.

The protein belongs to the PlsY family. As to quaternary structure, probably interacts with PlsX.

It localises to the cell membrane. It catalyses the reaction an acyl phosphate + sn-glycerol 3-phosphate = a 1-acyl-sn-glycero-3-phosphate + phosphate. It functions in the pathway lipid metabolism; phospholipid metabolism. Catalyzes the transfer of an acyl group from acyl-phosphate (acyl-PO(4)) to glycerol-3-phosphate (G3P) to form lysophosphatidic acid (LPA). This enzyme utilizes acyl-phosphate as fatty acyl donor, but not acyl-CoA or acyl-ACP. This chain is Glycerol-3-phosphate acyltransferase, found in Macrococcus caseolyticus (strain JCSC5402) (Macrococcoides caseolyticum).